The following is a 464-amino-acid chain: Bifunctional protein GlmU (464 aa).

Positions 1–236 (MRAVILAAGL…PTEALGVNTR (236 aa)) are pyrophosphorylase. UDP-N-acetyl-alpha-D-glucosamine is bound by residues 6-9 (LAAG), K20, and 77-78 (GT). Residue D102 participates in Mg(2+) binding. UDP-N-acetyl-alpha-D-glucosamine is bound by residues G145, E161, N176, and N234. Position 234 (N234) interacts with Mg(2+). A linker region spans residues 237 to 257 (WDLALVENVIKLKIARYWAER). Residues 258–464 (GVTVHYPETV…GRGKKKLQKD (207 aa)) form an N-acetyltransferase region. UDP-N-acetyl-alpha-D-glucosamine is bound by residues R340 and K358. Catalysis depends on H370, which acts as the Proton acceptor. UDP-N-acetyl-alpha-D-glucosamine is bound by residues Y373 and N384. Acetyl-CoA-binding positions include A387, 393 to 394 (NY), S412, G430, and R447.

This sequence in the N-terminal section; belongs to the N-acetylglucosamine-1-phosphate uridyltransferase family. In the C-terminal section; belongs to the transferase hexapeptide repeat family. As to quaternary structure, homotrimer. The cofactor is Mg(2+).

The protein resides in the cytoplasm. It catalyses the reaction alpha-D-glucosamine 1-phosphate + acetyl-CoA = N-acetyl-alpha-D-glucosamine 1-phosphate + CoA + H(+). The catalysed reaction is N-acetyl-alpha-D-glucosamine 1-phosphate + UTP + H(+) = UDP-N-acetyl-alpha-D-glucosamine + diphosphate. Its pathway is nucleotide-sugar biosynthesis; UDP-N-acetyl-alpha-D-glucosamine biosynthesis; N-acetyl-alpha-D-glucosamine 1-phosphate from alpha-D-glucosamine 6-phosphate (route II): step 2/2. The protein operates within nucleotide-sugar biosynthesis; UDP-N-acetyl-alpha-D-glucosamine biosynthesis; UDP-N-acetyl-alpha-D-glucosamine from N-acetyl-alpha-D-glucosamine 1-phosphate: step 1/1. It participates in bacterial outer membrane biogenesis; LPS lipid A biosynthesis. Its function is as follows. Catalyzes the last two sequential reactions in the de novo biosynthetic pathway for UDP-N-acetylglucosamine (UDP-GlcNAc). The C-terminal domain catalyzes the transfer of acetyl group from acetyl coenzyme A to glucosamine-1-phosphate (GlcN-1-P) to produce N-acetylglucosamine-1-phosphate (GlcNAc-1-P), which is converted into UDP-GlcNAc by the transfer of uridine 5-monophosphate (from uridine 5-triphosphate), a reaction catalyzed by the N-terminal domain. The chain is Bifunctional protein GlmU from Aquifex aeolicus (strain VF5).